Reading from the N-terminus, the 310-residue chain is Putative HTH-type transcriptional regulatory protein YN1551_1579 (310 aa).

The HTH cro/C1-type domain maps to leucine 125–valine 180. Positions isoleucine 136–lysine 155 form a DNA-binding region, H-T-H motif.

The polypeptide is Putative HTH-type transcriptional regulatory protein YN1551_1579 (Saccharolobus islandicus (strain Y.N.15.51 / Yellowstone #2) (Sulfolobus islandicus)).